Reading from the N-terminus, the 397-residue chain is Acetate kinase (397 aa).

N7 contacts Mg(2+). K14 lines the ATP pocket. R90 is a substrate binding site. The Proton donor/acceptor role is filled by D147. ATP-binding positions include 207–211 (HLGNG), 282–284 (DFR), and 330–334 (GLGEN). A Mg(2+)-binding site is contributed by E383.

It belongs to the acetokinase family. In terms of assembly, homodimer. Mg(2+) is required as a cofactor. Mn(2+) serves as cofactor.

The protein resides in the cytoplasm. It carries out the reaction acetate + ATP = acetyl phosphate + ADP. The protein operates within metabolic intermediate biosynthesis; acetyl-CoA biosynthesis; acetyl-CoA from acetate: step 1/2. In terms of biological role, catalyzes the formation of acetyl phosphate from acetate and ATP. Can also catalyze the reverse reaction. This chain is Acetate kinase, found in Clostridium botulinum (strain Kyoto / Type A2).